A 90-amino-acid chain; its full sequence is Acylphosphatase (90 aa).

One can recognise an Acylphosphatase-like domain in the interval 3–90 (RVLIKLTGKV…DIYLDFSIVR (88 aa)). Active-site residues include R18 and N36.

The protein belongs to the acylphosphatase family.

The catalysed reaction is an acyl phosphate + H2O = a carboxylate + phosphate + H(+). The sequence is that of Acylphosphatase (acyP) from Shewanella oneidensis (strain ATCC 700550 / JCM 31522 / CIP 106686 / LMG 19005 / NCIMB 14063 / MR-1).